Consider the following 388-residue polypeptide: Succinate--CoA ligase [ADP-forming] subunit beta (388 aa).

The ATP-grasp domain occupies 9–244 (KQLFARYGLP…QSQEDPREAQ (236 aa)). Residues lysine 46, 53-55 (GRG), glutamate 99, threonine 102, and glutamate 107 contribute to the ATP site. Residues asparagine 199 and aspartate 213 each contribute to the Mg(2+) site. Substrate is bound by residues asparagine 264 and 321–323 (GIV).

It belongs to the succinate/malate CoA ligase beta subunit family. In terms of assembly, heterotetramer of two alpha and two beta subunits. It depends on Mg(2+) as a cofactor.

It carries out the reaction succinate + ATP + CoA = succinyl-CoA + ADP + phosphate. It catalyses the reaction GTP + succinate + CoA = succinyl-CoA + GDP + phosphate. It participates in carbohydrate metabolism; tricarboxylic acid cycle; succinate from succinyl-CoA (ligase route): step 1/1. In terms of biological role, succinyl-CoA synthetase functions in the citric acid cycle (TCA), coupling the hydrolysis of succinyl-CoA to the synthesis of either ATP or GTP and thus represents the only step of substrate-level phosphorylation in the TCA. The beta subunit provides nucleotide specificity of the enzyme and binds the substrate succinate, while the binding sites for coenzyme A and phosphate are found in the alpha subunit. The polypeptide is Succinate--CoA ligase [ADP-forming] subunit beta (Shigella dysenteriae serotype 1 (strain Sd197)).